A 1103-amino-acid polypeptide reads, in one-letter code: Trophozoite exported protein 1 (1103 aa).

The stretch at 173-212 (KKEKIEDKKYEQDDEEENEEEEEEEEEEEGEEENKEDEEF) forms a coiled coil. 2 disordered regions span residues 178–210 (EDKK…KEDE) and 271–301 (KSYS…DNGK). The segment covering 184 to 210 (QDDEEENEEEEEEEEEEEGEEENKEDE) has biased composition (acidic residues). Basic and acidic residues predominate over residues 271–280 (KSYSGDEKIN). Coiled-coil stretches lie at residues 304–330 (DYVK…LECN) and 478–518 (YKNY…KLNN). A disordered region spans residues 544–601 (YFDEGENPYNRNNKNYRTDNKNSDDNNNNNNYYYNNYNSDDNYNSEDNEYNNGNYRFR). Positions 568–585 (DNNNNNNYYYNNYNSDDN) are enriched in low complexity. Coiled coils occupy residues 650–791 (FRNL…LSGI), 819–932 (DEKY…IYKK), and 993–1030 (NKKL…NLSK). Residues 1050–1089 (CSVCMENFRNYIIIKCGHIYCNNCIFNNLKTRNRKCPQCK) form an RING-type zinc finger.

Its subcellular location is the host cell membrane. The polypeptide is Trophozoite exported protein 1 (Plasmodium falciparum (isolate 3D7)).